The primary structure comprises 178 residues: ATP-dependent protease subunit HslV (178 aa).

The active site involves T5. The Na(+) site is built by G161, C164, and T167.

Belongs to the peptidase T1B family. HslV subfamily. A double ring-shaped homohexamer of HslV is capped on each side by a ring-shaped HslU homohexamer. The assembly of the HslU/HslV complex is dependent on binding of ATP.

The protein resides in the cytoplasm. It catalyses the reaction ATP-dependent cleavage of peptide bonds with broad specificity.. With respect to regulation, allosterically activated by HslU binding. In terms of biological role, protease subunit of a proteasome-like degradation complex believed to be a general protein degrading machinery. This is ATP-dependent protease subunit HslV from Aliarcobacter butzleri (strain RM4018) (Arcobacter butzleri).